Consider the following 1858-residue polypeptide: Protein ROS1C (1858 aa).

The span at T347–P356 shows a compositional bias: basic and acidic residues. Disordered regions lie at residues T347–F416 and P1288–E1309. Basic residues-rich tracts occupy residues L360–K370 and K394–R404. Residues C1492, C1499, C1502, and C1508 each coordinate [4Fe-4S] cluster.

Belongs to the DNA glycosylase family. DEMETER subfamily. [4Fe-4S] cluster is required as a cofactor. Expressed in pistils and immature seeds. Expressed a low levels in roots, leaves and anthers.

The protein resides in the nucleus. Bifunctional DNA glycosylase/lyase, which excises 5-methylcytosine (5-meC) and 5-hydroxymethylcytosine (5-hmeC), leaving an apyrimidinic (AP) site that is subsequently incised by the lyase activity. Is responsible for the demethylation of methylated cytosine residues of Tos17 retrotransposon DNA. Demethylation of Tos17 cytosine residues promotes its transposition. May be involved in seed development. The chain is Protein ROS1C from Oryza sativa subsp. japonica (Rice).